Consider the following 360-residue polypeptide: Histidinol-phosphate aminotransferase (360 aa).

Position 222 is an N6-(pyridoxal phosphate)lysine (K222).

It belongs to the class-II pyridoxal-phosphate-dependent aminotransferase family. Histidinol-phosphate aminotransferase subfamily. In terms of assembly, homodimer. Pyridoxal 5'-phosphate serves as cofactor.

It catalyses the reaction L-histidinol phosphate + 2-oxoglutarate = 3-(imidazol-4-yl)-2-oxopropyl phosphate + L-glutamate. It participates in amino-acid biosynthesis; L-histidine biosynthesis; L-histidine from 5-phospho-alpha-D-ribose 1-diphosphate: step 7/9. This is Histidinol-phosphate aminotransferase from Listeria welshimeri serovar 6b (strain ATCC 35897 / DSM 20650 / CCUG 15529 / CIP 8149 / NCTC 11857 / SLCC 5334 / V8).